The chain runs to 318 residues: Probable mitochondrial 2-oxoglutarate/malate carrier protein (318 aa).

Solcar repeat units lie at residues 22–111 (QSQL…IKDI), 119–210 (LPFT…TKQL), and 219–309 (DDIK…LNIL). Helical transmembrane passes span 28–48 (FVIG…IDSL), 79–99 (GFFT…TYTT), 125–145 (IMVG…ADLT), 185–205 (GCSP…SSYD), 225–245 (LIAS…LDVI), and 281–301 (FYKG…LTFI).

The protein belongs to the mitochondrial carrier (TC 2.A.29) family.

Its subcellular location is the mitochondrion inner membrane. Functionally, mitochondrial solute carriers shuttle metabolites, nucleotides, and cofactors through the mitochondrial inner membrane. Catalyzes the transport of 2-oxoglutarate across the inner mitochondrial membrane in an electroneutral exchange for malate or other dicarboxylic acids, and plays an important role in several metabolic processes, including the malate-aspartate shuttle, the oxoglutarate/isocitrate shuttle, in gluconeogenesis from lactate, and in nitrogen metabolism. This is Probable mitochondrial 2-oxoglutarate/malate carrier protein (ucpC) from Dictyostelium discoideum (Social amoeba).